A 468-amino-acid polypeptide reads, in one-letter code: 3-isopropylmalate dehydratase large subunit (468 aa).

Cys347, Cys407, and Cys410 together coordinate [4Fe-4S] cluster.

This sequence belongs to the aconitase/IPM isomerase family. LeuC type 1 subfamily. As to quaternary structure, heterodimer of LeuC and LeuD. [4Fe-4S] cluster is required as a cofactor.

It carries out the reaction (2R,3S)-3-isopropylmalate = (2S)-2-isopropylmalate. It functions in the pathway amino-acid biosynthesis; L-leucine biosynthesis; L-leucine from 3-methyl-2-oxobutanoate: step 2/4. Functionally, catalyzes the isomerization between 2-isopropylmalate and 3-isopropylmalate, via the formation of 2-isopropylmaleate. The sequence is that of 3-isopropylmalate dehydratase large subunit from Rippkaea orientalis (strain PCC 8801 / RF-1) (Cyanothece sp. (strain PCC 8801)).